Here is a 375-residue protein sequence, read N- to C-terminus: Chaperone protein DnaJ (375 aa).

The region spanning 4–68 (DYYEVLGVGK…QKRAQYDRFG (65 aa)) is the J domain. The CR-type zinc-finger motif lies at 129–211 (GKETDVEIPK…CRGSGRVKVR (83 aa)). Zn(2+) is bound by residues Cys142, Cys145, Cys159, Cys162, Cys185, Cys188, Cys199, and Cys202. 4 CXXCXGXG motif repeats span residues 142 to 149 (CDTCHGSG), 159 to 166 (CKTCSGTG), 185 to 192 (CTTCEGKG), and 199 to 206 (CSSCRGSG). Residues 349–375 (LSGEKPGQHGGEDEGFFEKMKRAFRGE) are disordered.

The protein belongs to the DnaJ family. Homodimer. Requires Zn(2+) as cofactor.

The protein resides in the cytoplasm. In terms of biological role, participates actively in the response to hyperosmotic and heat shock by preventing the aggregation of stress-denatured proteins and by disaggregating proteins, also in an autonomous, DnaK-independent fashion. Unfolded proteins bind initially to DnaJ; upon interaction with the DnaJ-bound protein, DnaK hydrolyzes its bound ATP, resulting in the formation of a stable complex. GrpE releases ADP from DnaK; ATP binding to DnaK triggers the release of the substrate protein, thus completing the reaction cycle. Several rounds of ATP-dependent interactions between DnaJ, DnaK and GrpE are required for fully efficient folding. Also involved, together with DnaK and GrpE, in the DNA replication of plasmids through activation of initiation proteins. The sequence is that of Chaperone protein DnaJ from Brevibacillus choshinensis.